The following is a 440-amino-acid chain: 5-hydroxytryptamine receptor 6 (440 aa).

Topologically, residues 1–27 (MVPEPGPTANSTPAWGAGPPSAPGGSG) are extracellular. The helical transmembrane segment at 28-52 (WVAAALCVVIALTAAANSLLIALIC) threads the bilayer. Over 53 to 62 (TQPALRNTSN) the chain is Cytoplasmic. Residues 63 to 88 (FFLVSLFTSDLMVGLVVMPPAMLNAL) form a helical membrane-spanning segment. The Extracellular portion of the chain corresponds to 89–96 (YGRWVLAR). Residues 97-122 (GLCLLWTAFDVMCCSASILNLCLISL) traverse the membrane as a helical segment. Cysteine 99 and cysteine 180 are disulfide-bonded. Aspartate 106 is a serotonin binding site. Topologically, residues 123–142 (DRYLLILSPLRYKLRMTPLR) are cytoplasmic. A helical transmembrane segment spans residues 143-167 (ALALVLGAWSLAALASFLPLLLGWH). The Extracellular portion of the chain corresponds to 168–185 (ELGHARPPVPGQCRLLAS). A helical transmembrane segment spans residues 186-209 (LPFVLVASGLTFFLPSGAICFTYC). The Cytoplasmic segment spans residues 210 to 266 (RILLAARKQAVQVASLTTGMASQASETLQVPRTPRPGVESADSRRLATKHSRKALKA). Residues 267–293 (SLTLGILLGMFFVTWLPFFVANIVQAV) form a helical membrane-spanning segment. Residue asparagine 288 participates in serotonin binding. Over 294 to 299 (CDCISP) the chain is Extracellular. The chain crosses the membrane as a helical span at residues 300-323 (GLFDVLTWLGYCNSTMNPIIYPLF). Residues 324–440 (MRDFKRALGR…RPHPLGIPTN (117 aa)) are Cytoplasmic-facing. The interval 346–392 (ASLASPSLRTSHSGPRPGLSLQQVLPLPLPPDSDSDSDAGSGGSSGL) is disordered. A compositionally biased stretch (polar residues) spans 347-358 (SLASPSLRTSHS). Low complexity predominate over residues 362-371 (PGLSLQQVLP).

Belongs to the G-protein coupled receptor 1 family. Interacts with MTOR, RPTOR and NF1. Interacts with CDK5. In terms of tissue distribution, expressed in several human brain regions, most prominently in the caudate nucleus.

It localises to the cell membrane. Functionally, G-protein coupled receptor for 5-hydroxytryptamine (serotonin), a biogenic hormone that functions as a neurotransmitter, a hormone and a mitogen. Also has a high affinity for tricyclic psychotropic drugs. Ligand binding causes a conformation change that triggers signaling via guanine nucleotide-binding proteins (G proteins) and modulates the activity of downstream effectors. HTR6 is coupled to G(s) G alpha proteins and mediates activation of adenylate cyclase activity. Controls pyramidal neurons migration during corticogenesis, through the regulation of CDK5 activity. Is an activator of mTOR signaling. This Homo sapiens (Human) protein is 5-hydroxytryptamine receptor 6.